The primary structure comprises 391 residues: Succinate--CoA ligase [ADP-forming] subunit beta (391 aa).

The ATP-grasp domain occupies 9 to 248 (KDILRKFGVA…ISEEDPFEVE (240 aa)). Residues K50, 57-59 (GRG), E103, M106, and E111 contribute to the ATP site. N203 and D217 together coordinate Mg(2+). Substrate-binding positions include N268 and 325-327 (GIV).

The protein belongs to the succinate/malate CoA ligase beta subunit family. As to quaternary structure, heterotetramer of two alpha and two beta subunits. Mg(2+) serves as cofactor.

The enzyme catalyses succinate + ATP + CoA = succinyl-CoA + ADP + phosphate. The catalysed reaction is GTP + succinate + CoA = succinyl-CoA + GDP + phosphate. It functions in the pathway carbohydrate metabolism; tricarboxylic acid cycle; succinate from succinyl-CoA (ligase route): step 1/1. In terms of biological role, succinyl-CoA synthetase functions in the citric acid cycle (TCA), coupling the hydrolysis of succinyl-CoA to the synthesis of either ATP or GTP and thus represents the only step of substrate-level phosphorylation in the TCA. The beta subunit provides nucleotide specificity of the enzyme and binds the substrate succinate, while the binding sites for coenzyme A and phosphate are found in the alpha subunit. The protein is Succinate--CoA ligase [ADP-forming] subunit beta of Chlorobium luteolum (strain DSM 273 / BCRC 81028 / 2530) (Pelodictyon luteolum).